The primary structure comprises 685 residues: MEWGYLLEVTSLLAALAVLQRSSGAAAASAKELACQEITVPLCKGIGYNYTYMPNQFNHDTQDEAGLEVHQFWPLVEIQCSPDLKFFLCSMYTPICLEDYKKPLPPCRSVCERAKAGCAPLMRQYGFAWPDRMRCDRLPEQGNPDTLCMDYNRTDLTTAAPSPPRRLPPPPPPGEQPPSGSGHSRPPGARPPHRGGSSRGSGDAAAAPPSRGGKARPPGGGAAPCEPGCQCRAPMVSVSSERHPLYNRVKTGQIANCALPCHNPFFSQDERAFTVFWIGLWSVLCFVSTFATVSTFLIDMERFKYPERPIIFLSACYLFVSVGYLVRLVAGHEKVACSGGAPGAGGAGGAGGAAAAGAGAAGAGASSPGARGEYEELGAVEQHVRYETTGPALCTVVFLLVYFFGMASSIWWVILSLTWFLAAGMKWGNEAIAGYSQYFHLAAWLVPSVKSIAVLALSSVDGDPVAGICYVGNQSLDNLRGFVLAPLVIYLFIGTMFLLAGFVSLFRIRSVIKQQGGPTKTHKLEKLMIRLGLFTVLYTVPAAVVVACLFYEQHNRPRWEATHNCPCLRDLQPDQARRPDYAVFMLKYFMCLVVGITSGVWVWSGKTLESWRALCTRCCWASKGAAVGAGAGGSGPGGSGPGPGGGGGHGGGGGSLYSDVSTGLTWRSGTASSVSYPKQMPLSQV.

The signal sequence occupies residues 1-27 (MEWGYLLEVTSLLAALAVLQRSSGAAA). Over 28 to 272 (ASAKELACQE…NPFFSQDERA (245 aa)) the chain is Extracellular. The 122-residue stretch at 30–151 (AKELACQEIT…GNPDTLCMDY (122 aa)) folds into the FZ domain. Intrachain disulfides connect Cys-35-Cys-96, Cys-43-Cys-89, Cys-80-Cys-118, Cys-107-Cys-148, and Cys-111-Cys-135. Residue Asn-49 is glycosylated (N-linked (GlcNAc...) asparagine). 71-78 (QFWPLVEI) is a binding site for hexadecanoate. The segment at 95–100 (ICLEDY) is wnt-binding. A wnt-binding region spans residues 147–152 (LCMDYN). Asn-152 is a glycosylation site (N-linked (GlcNAc...) asparagine). Positions 155 to 223 (DLTTAAPSPP…KARPPGGGAA (69 aa)) are disordered. Pro residues predominate over residues 161–176 (PSPPRRLPPPPPPGEQ). 2 stretches are compositionally biased toward low complexity: residues 177-187 (PPSGSGHSRPP) and 200-223 (GSGD…GGAA). The chain crosses the membrane as a helical span at residues 273–293 (FTVFWIGLWSVLCFVSTFATV). The Cytoplasmic portion of the chain corresponds to 294–309 (STFLIDMERFKYPERP). Residues 310–330 (IIFLSACYLFVSVGYLVRLVA) form a helical membrane-spanning segment. At 331 to 394 (GHEKVACSGG…RYETTGPALC (64 aa)) the chain is on the extracellular side. Residues 395-415 (TVVFLLVYFFGMASSIWWVIL) form a helical membrane-spanning segment. Over 416 to 437 (SLTWFLAAGMKWGNEAIAGYSQ) the chain is Cytoplasmic. A helical membrane pass occupies residues 438–458 (YFHLAAWLVPSVKSIAVLALS). At 459–481 (SVDGDPVAGICYVGNQSLDNLRG) the chain is on the extracellular side. N-linked (GlcNAc...) asparagine glycosylation occurs at Asn-473. A helical membrane pass occupies residues 482-502 (FVLAPLVIYLFIGTMFLLAGF). The Cytoplasmic segment spans residues 503 to 530 (VSLFRIRSVIKQQGGPTKTHKLEKLMIR). Residues 531–551 (LGLFTVLYTVPAAVVVACLFY) traverse the membrane as a helical segment. Residues 552 to 582 (EQHNRPRWEATHNCPCLRDLQPDQARRPDYA) lie on the Extracellular side of the membrane. The chain crosses the membrane as a helical span at residues 583–603 (VFMLKYFMCLVVGITSGVWVW). Topologically, residues 604-685 (SGKTLESWRA…YPKQMPLSQV (82 aa)) are cytoplasmic. The short motif at 606 to 611 (KTLESW) is the Lys-Thr-X-X-X-Trp motif, mediates interaction with the PDZ domain of Dvl family members element. Over residues 631 to 655 (AGGSGPGGSGPGPGGGGGHGGGGGS) the composition is skewed to gly residues. The disordered stretch occupies residues 631–656 (AGGSGPGGSGPGPGGGGGHGGGGGSL). Residues 683–685 (SQV) carry the PDZ-binding motif.

It belongs to the G-protein coupled receptor Fz/Smo family. In terms of assembly, component of a Wnt-signaling complex that contains a WNT protein, a FZD protein and LRP5 or LRP6. Interacts directly with LRP5 or LRP6; the interaction is promoted by Wnt-binding and signaling and inhibited by DKK1. Interacts (via the PDZ-binding motif) with GPOC (via its PDZ domain). Interacts with RSPO1 and RSPO3. Interacts with glypican GPC3. Ubiquitinated by ZNRF3, leading to its degradation by the proteasome. Expressed in chondrocytes.

Its subcellular location is the membrane. It is found in the golgi apparatus. It localises to the cell membrane. Receptor for Wnt proteins. Component of the Wnt-Fzd-LRP5-LRP6 complex that triggers beta-catenin signaling through inducing aggregation of receptor-ligand complexes into ribosome-sized signalosomes. The beta-catenin canonical signaling pathway leads to the activation of disheveled proteins, inhibition of GSK-3 kinase, nuclear accumulation of beta-catenin and activation of Wnt target genes. A second signaling pathway involving PKC and calcium fluxes has been seen for some family members, but it is not yet clear if it represents a distinct pathway or if it can be integrated in the canonical pathway, as PKC seems to be required for Wnt-mediated inactivation of GSK-3 kinase. Both pathways seem to involve interactions with G-proteins. May be involved in transduction and intercellular transmission of polarity information during tissue morphogenesis and/or in differentiated tissues. Coreceptor along with RYK of Wnt proteins, such as WNT1. The protein is Frizzled-8 (Fzd8) of Mus musculus (Mouse).